Reading from the N-terminus, the 87-residue chain is Bradykinin-potentiating peptide NDBP12 (87 aa).

The signal sequence occupies residues 1–22 (MNKRVLLVIFFVTLLVADEVNS). Over residues 64–75 (PAEAPAPAAAAP) the composition is skewed to low complexity. A disordered region spans residues 64–87 (PAEAPAPAAAAPEEPPVEQRRRRR).

The protein belongs to the non-disulfide-bridged peptide (NDBP) superfamily. Long chain multifunctional peptide (group 2) family. As to expression, expressed by the venom gland.

Its subcellular location is the secreted. Its function is as follows. Inhibits angiotensin-converting enzyme (ACE), but does not serve as substrate for the enzyme. Potentiates bradykinin (BK) on the isolated guinea pig ileum as well as the isolated rat uterus for contraction. Also potentiates in vivo the depressor effect of BK on arterial blood pressure in the normotensive anesthetized rat. This chain is Bradykinin-potentiating peptide NDBP12, found in Lychas mucronatus (Chinese swimming scorpion).